A 504-amino-acid chain; its full sequence is Endosomal/lysosomal proton channel TMEM175 (504 aa).

The disordered stretch occupies residues 1 to 27 (MSQPRTPEQALDTPGDCPPGRRDEDAG). Residues 1-33 (MSQPRTPEQALDTPGDCPPGRRDEDAGEGIQCS) lie on the Cytoplasmic side of the membrane. T6 bears the Phosphothreonine mark. The chain crosses the membrane as a helical span at residues 34–56 (QRMLSFSDALLSIIATVMILPVT). The short motif at 35–41 (RMLSFSD) is the RxxxFSD motif 1 element. Over 57 to 77 (HTEISPEQQFDRSVQRLLATR) the chain is Lumenal. The interval 58-63 (TEISPE) is short helix H1-1. The tract at residues 65–71 (QFDRSVQ) is short helix H2-1. The helical transmembrane segment at 78–100 (IAVYLMTFLIVTVAWAAHTRLFQ) threads the bilayer. Over 101 to 106 (VVGKTD) the chain is Cytoplasmic. A helical transmembrane segment spans residues 107-128 (DTLALLNLACMMTITFLPYTFS). The Lumenal portion of the chain corresponds to 129–138 (LMVTFPDVPL). Residues 139 to 160 (GIFLFCVCVIAIGVVQALIVGY) traverse the membrane as a helical segment. Topologically, residues 161–184 (AFHFPHLLSPQIQRSAHRALYRRH) are cytoplasmic. The helical transmembrane segment at 185 to 205 (VLGIVLQGPALCFAAAIFSLF) threads the bilayer. At 206 to 210 (FVPLS) the chain is on the lumenal side. The chain crosses the membrane as a helical span at residues 211–230 (YLLMVTVILLPYVSKVTGWC). The Cytoplasmic portion of the chain corresponds to 231–257 (RDRLLGHREPSAHPVEVFSFDLHEPLS). A helical membrane pass occupies residues 258–282 (KERVEAFSDGVYAIVATLLILDICE). Positions 260-266 (RVEAFSD) match the RxxxFSD motif 2 motif. The Lumenal portion of the chain corresponds to 283–309 (DNVPDPKDVKERFSGSLVAALSATGPR). Positions 288–296 (PKDVKERFS) are short helix H1-2. The segment at 298–304 (SLVAALS) is short helix H2-2. A helical membrane pass occupies residues 310–332 (FLAYFGSFATVGLLWFAHHSLFL). At 333–338 (HVRKAT) the chain is on the cytoplasmic side. A helical membrane pass occupies residues 339–360 (RAMGLLNTLSLAFVGGLPLAYQ). Residues 361 to 375 (QTSAFARQPRDELER) are Lumenal-facing. The helical transmembrane segment at 376–396 (VRVSCTIIFLASIFQLAMWTT) threads the bilayer. The Cytoplasmic segment spans residues 397 to 416 (ALLHQAETLQPSVWFGGREH). Residues 417 to 440 (VLMFAKLALYPCASLLAFASTCLL) traverse the membrane as a helical segment. Topologically, residues 441–442 (SR) are lumenal. A helical transmembrane segment spans residues 443–469 (FSVGIFHLMQIAVPCAFLLLRLLVGLA). At 470 to 504 (LATLRVLRGLARPEHPPPAPTGQDDPQSQLLPAPC) the chain is on the cytoplasmic side. The tract at residues 483 to 504 (EHPPPAPTGQDDPQSQLLPAPC) is disordered. The segment covering 493 to 504 (DDPQSQLLPAPC) has biased composition (polar residues).

This sequence belongs to the TMEM175 family. Homodimer. Interacts with AKT (AKT1, AKT2 or AKT3); leading to formation of the lysoK(GF) complex, which activates the channel. Interacts with LAMP1; inhibiting the proton channel activity of TMEM175. Interacts with LAMP2; inhibiting the proton channel activity of TMEM175. As to expression, widely expressed.

Its subcellular location is the endosome membrane. It is found in the lysosome membrane. The catalysed reaction is H(+)(in) = H(+)(out). It catalyses the reaction K(+)(in) = K(+)(out). Active at low pH (under pH 4.6): proton channel activity is activated by luminal side protons. Polyunsaturated fatty acids, such as arachidonic acid, also activate the channel activity. Proton channel activity is directly inhibited by LAMP1 or LAMP2, facilitating lysosomal acidification. Channel activity is activated following interaction with AKT (AKT1, AKT2 or AKT3): interaction promotes activation from closed to an open state. Activation by AKT is independent of AKT serine/threonine-protein kinase activity. Its function is as follows. Proton-activated proton channel that catalyzes proton efflux from endosomes and lysosomes to maintain a steady-state pH. Activated at low pH (under pH 4.6) by luminal side protons: selectively mediates lysosomal proton release from lysosomes, eliciting a proton leak that balances V-ATPase activity to maintain pH homeostasis. Regulation of lumenal pH stability is required for autophagosome-lysosome fusion. Also acts as a potassium channel at higher pH, regulating potassium conductance in endosomes and lysosomes. Constitutes the pore-forming subunit of the lysoK(GF) complex, a complex activated by extracellular growth factors. The lysoK(GF) complex is composed of TMEM175 and AKT (AKT1, AKT2 or AKT3), a major target of growth factor receptors: in the complex, TMEM175 channel is opened by conformational changes by AKT, leading to its activation. The lysoK(GF) complex is required to protect neurons against stress-induced damage. The protein is Endosomal/lysosomal proton channel TMEM175 of Homo sapiens (Human).